The primary structure comprises 196 residues: Large ribosomal subunit protein eL15 (196 aa).

A compositionally biased stretch (basic residues) spans 162 to 172 (RGKTSAGRRAR). The disordered stretch occupies residues 162–196 (RGKTSAGRRARGLQNRGKGTEGLRPSTNADKRNKS).

The protein belongs to the eukaryotic ribosomal protein eL15 family.

In Halobacterium salinarum (strain ATCC 29341 / DSM 671 / R1), this protein is Large ribosomal subunit protein eL15.